A 132-amino-acid chain; its full sequence is Translation initiation factor 5A (132 aa).

Lysine 36 carries the hypusine modification.

It belongs to the eIF-5A family.

It is found in the cytoplasm. In terms of biological role, functions by promoting the formation of the first peptide bond. This chain is Translation initiation factor 5A, found in Methanosphaera stadtmanae (strain ATCC 43021 / DSM 3091 / JCM 11832 / MCB-3).